The primary structure comprises 352 residues: Ion-translocating oxidoreductase complex subunit D (352 aa).

The next 4 membrane-spanning stretches (helical) occupy residues 20–40 (IMLLVLIAALPGIAAQTWFFG), 42–62 (GTLFQIVLAAITALVAEAIVL), 69–91 (VASHLQDYSALLTGLLLAVSIPP), and 123–143 (PAMIGYVVLLISFPVQMTSWL). FMN phosphoryl threonine is present on T187. 5 consecutive transmembrane segments (helical) span residues 215 to 235 (LAGVGWQWVNLAWLVGGVFLL), 242 to 262 (WHIPVSFLLTLALCAALGWLF), 267 to 287 (LASPQLHLLSGATMLGAFFIL), 301 to 321 (LIFGALAGVLVWLIRSFGGYP), and 322 to 342 (DGVAFAVLLANITVPLIDYYT).

The protein belongs to the NqrB/RnfD family. In terms of assembly, the complex is composed of six subunits: RsxA, RsxB, RsxC, RsxD, RsxE and RsxG. FMN serves as cofactor.

The protein localises to the cell inner membrane. Part of a membrane-bound complex that couples electron transfer with translocation of ions across the membrane. Required to maintain the reduced state of SoxR. This Salmonella paratyphi B (strain ATCC BAA-1250 / SPB7) protein is Ion-translocating oxidoreductase complex subunit D.